The chain runs to 286 residues: MKIINNKFQKITVAIIFSWLIFFVLIPNLLVLAVSFLTRDGSNFYAFPITIENYTNLFNPLYAQVVWNSLSMSGIATIICLLIGYPFAFMMSKIHPKYRPLLLFLVVLPFWTNSLIRIYGMKVFLGVKGILNTMLIDMGILSAPIRILNTEIAVIIGLVYLLLPFMILPLYSAIEKLDNRLLEAARDLGANTFQRFFRVILPLTMPGIIAGCLLVLLPAMGMFYVADLLGGAKVLLVGNVIKSEFLISRNWPFGSAVSIGLTVLMALLIFVYYRANKLLNRKVELE.

Topologically, residues 1 to 13 (MKIINNKFQKITV) are cytoplasmic. Residues 14–33 (AIIFSWLIFFVLIPNLLVLA) form a helical membrane-spanning segment. The Periplasmic portion of the chain corresponds to 34 to 71 (VSFLTRDGSNFYAFPITIENYTNLFNPLYAQVVWNSLS). The ABC transmembrane type-1 domain occupies 66-274 (VWNSLSMSGI…MALLIFVYYR (209 aa)). Residues 72–91 (MSGIATIICLLIGYPFAFMM) traverse the membrane as a helical segment. The Cytoplasmic portion of the chain corresponds to 92–100 (SKIHPKYRP). A helical transmembrane segment spans residues 101 to 120 (LLLFLVVLPFWTNSLIRIYG). Residues 121-151 (MKVFLGVKGILNTMLIDMGILSAPIRILNTE) are Periplasmic-facing. Residues 152–171 (IAVIIGLVYLLLPFMILPLY) form a helical membrane-spanning segment. Over 172–199 (SAIEKLDNRLLEAARDLGANTFQRFFRV) the chain is Cytoplasmic. Residues 200 to 219 (ILPLTMPGIIAGCLLVLLPA) traverse the membrane as a helical segment. The Periplasmic portion of the chain corresponds to 220 to 252 (MGMFYVADLLGGAKVLLVGNVIKSEFLISRNWP). The chain crosses the membrane as a helical span at residues 253–272 (FGSAVSIGLTVLMALLIFVY). Residues 273–286 (YRANKLLNRKVELE) lie on the Cytoplasmic side of the membrane.

Belongs to the binding-protein-dependent transport system permease family. CysTW subfamily.

It is found in the cell inner membrane. Required for the activity of the bacterial periplasmic transport system of putrescine and spermidine. The sequence is that of Spermidine/putrescine transport system permease protein PotB (potB) from Haemophilus influenzae (strain ATCC 51907 / DSM 11121 / KW20 / Rd).